Reading from the N-terminus, the 319-residue chain is tRNA U34 carboxymethyltransferase (319 aa).

Carboxy-S-adenosyl-L-methionine contacts are provided by residues Lys88, Trp102, Lys107, Gly126, 176–177 (LE), Met192, Tyr196, and Arg311.

It belongs to the class I-like SAM-binding methyltransferase superfamily. CmoB family. As to quaternary structure, homotetramer.

It carries out the reaction carboxy-S-adenosyl-L-methionine + 5-hydroxyuridine(34) in tRNA = 5-carboxymethoxyuridine(34) in tRNA + S-adenosyl-L-homocysteine + H(+). Its function is as follows. Catalyzes carboxymethyl transfer from carboxy-S-adenosyl-L-methionine (Cx-SAM) to 5-hydroxyuridine (ho5U) to form 5-carboxymethoxyuridine (cmo5U) at position 34 in tRNAs. The polypeptide is tRNA U34 carboxymethyltransferase (Pseudomonas syringae pv. syringae (strain B728a)).